A 381-amino-acid polypeptide reads, in one-letter code: cAMP-dependent protein kinase type I-alpha regulatory subunit (381 aa).

Position 1 is an N-acetylmethionine (M1). The interval 1 to 135 (MESGSTAASE…AALAKAIEKN (135 aa)) is dimerization and phosphorylation. A Phosphoserine modification is found at S3. Residues 64 to 96 (QIQNLQKAGTRTDSREDEISPPPPNPVVKGRRR) are disordered. The residue at position 75 (T75) is a Phosphothreonine. Phosphoserine occurs at positions 77 and 83. A Pseudophosphorylation motif motif is present at residues 96 to 100 (RRGAI). Phosphoserine is present on S101. 3',5'-cyclic AMP is bound by residues 137 to 254 (LFSH…SKVS), E202, R211, 255 to 381 (ILES…SLSV), E326, and R335. S258 is modified (phosphoserine).

It belongs to the cAMP-dependent kinase regulatory chain family. As to quaternary structure, the inactive holoenzyme is composed of two regulatory chains and two catalytic chains. Activation by cAMP releases the two active catalytic monomers and the regulatory dimer. Interacts with PRKACA and PRKACB. PRKAR1A also interacts with RFC2; the complex may be involved in cell survival. Interacts with AKAP4. Interacts with RARA; the interaction occurs in the presence of cAMP or FSH and regulates RARA transcriptional activity. Interacts with the phosphorylated form of PJA2. Interacts with CBFA2T3. Interacts with PRKX; regulates this cAMP-dependent protein kinase. Interacts with smAKAP; this interaction may target PRKAR1A to the plasma membrane. Interacts with AICDA. Post-translationally, the pseudophosphorylation site binds to the substrate-binding region of the catalytic chain, resulting in the inhibition of its activity.

The protein resides in the cell membrane. Its function is as follows. Regulatory subunit of the cAMP-dependent protein kinases involved in cAMP signaling in cells. The protein is cAMP-dependent protein kinase type I-alpha regulatory subunit (PRKAR1A) of Pongo abelii (Sumatran orangutan).